A 428-amino-acid polypeptide reads, in one-letter code: Involucrin (428 aa).

2 disordered regions span residues 1-128 (MSQQ…EEKK) and 140-398 (KRDD…GQAQ). The segment covering 56-76 (PSKHEEKHVTIVKGVPEHECE) has biased composition (basic and acidic residues). Positions 77-92 (QQQQAQGQERQQQHWG) are enriched in low complexity. 3 stretches are compositionally biased toward basic and acidic residues: residues 107–117 (LKQEEAQREKQ), 162–174 (QLKHLEQQEKPLE), and 192–208 (QLKHLEEQKGQLKHLEQ). Residues 209-218 (QEGQLELPEQ) are compositionally biased toward low complexity. Over residues 220–297 (DQPKHLEQLE…CEGQLEHLEQ (78 aa)) the composition is skewed to basic and acidic residues. Low complexity predominate over residues 298–311 (QEGQLELPEQQVGQ). Composition is skewed to basic and acidic residues over residues 313-327 (KHLEQEEKQLEHPEQ), 352-366 (KHLEQQEKQLEHPEQ), and 374-385 (QLKDLEQQERQL).

It belongs to the involucrin family. As to quaternary structure, directly or indirectly cross-linked to cornifelin (CNFN). Post-translationally, substrate of transglutaminase. Specific glutamines or lysines are cross-linked to keratins, desmoplakin and to inter involucrin molecules. In terms of tissue distribution, keratinocytes of epidermis and other stratified squamous epithelia.

It is found in the cytoplasm. Its function is as follows. Part of the insoluble cornified cell envelope (CE) of stratified squamous epithelia. The polypeptide is Involucrin (IVL) (Cebus albifrons (White-fronted capuchin)).